A 421-amino-acid polypeptide reads, in one-letter code: D-amino acid dehydrogenase (421 aa).

Position 3–17 (3–17 (ILILGSGVVGTASAY)) interacts with FAD.

Belongs to the DadA oxidoreductase family. The cofactor is FAD.

The catalysed reaction is a D-alpha-amino acid + A + H2O = a 2-oxocarboxylate + AH2 + NH4(+). The protein operates within amino-acid degradation; D-alanine degradation; NH(3) and pyruvate from D-alanine: step 1/1. Its function is as follows. Oxidative deamination of D-amino acids. This chain is D-amino acid dehydrogenase, found in Xanthobacter autotrophicus (strain ATCC BAA-1158 / Py2).